The primary structure comprises 663 residues: UvrABC system protein B (663 aa).

The 241-residue stretch at 31–271 (DNIEGGEKAQ…EQSISKIQAE (241 aa)) folds into the Helicase ATP-binding domain. 44-51 (GATGTGKT) contributes to the ATP binding site. The Beta-hairpin motif lies at 97-120 (YYDYYQPEAYVPSSDTYIEKDSSV). The 167-residue stretch at 435-601 (QMDDLLGEIN…TIKKDIRDLI (167 aa)) folds into the Helicase C-terminal domain. Residues 627–662 (QEAIKQLQKNMQEAAELLDFELAAQLRDLILELKAM) enclose the UVR domain.

The protein belongs to the UvrB family. Forms a heterotetramer with UvrA during the search for lesions. Interacts with UvrC in an incision complex.

It is found in the cytoplasm. Functionally, the UvrABC repair system catalyzes the recognition and processing of DNA lesions. A damage recognition complex composed of 2 UvrA and 2 UvrB subunits scans DNA for abnormalities. Upon binding of the UvrA(2)B(2) complex to a putative damaged site, the DNA wraps around one UvrB monomer. DNA wrap is dependent on ATP binding by UvrB and probably causes local melting of the DNA helix, facilitating insertion of UvrB beta-hairpin between the DNA strands. Then UvrB probes one DNA strand for the presence of a lesion. If a lesion is found the UvrA subunits dissociate and the UvrB-DNA preincision complex is formed. This complex is subsequently bound by UvrC and the second UvrB is released. If no lesion is found, the DNA wraps around the other UvrB subunit that will check the other stand for damage. The polypeptide is UvrABC system protein B (Streptococcus equi subsp. equi (strain 4047)).